The chain runs to 309 residues: Glutaminase (309 aa).

Residues serine 65, asparagine 117, glutamate 162, asparagine 169, tyrosine 193, tyrosine 245, and valine 263 each coordinate substrate.

It belongs to the glutaminase family. Homotetramer.

The catalysed reaction is L-glutamine + H2O = L-glutamate + NH4(+). The chain is Glutaminase from Bacillus mycoides (strain KBAB4) (Bacillus weihenstephanensis).